Here is a 515-residue protein sequence, read N- to C-terminus: Bifunctional purine biosynthesis protein PurH (515 aa).

Residues M1 to V145 enclose the MGS-like domain.

The protein belongs to the PurH family.

The enzyme catalyses (6R)-10-formyltetrahydrofolate + 5-amino-1-(5-phospho-beta-D-ribosyl)imidazole-4-carboxamide = 5-formamido-1-(5-phospho-D-ribosyl)imidazole-4-carboxamide + (6S)-5,6,7,8-tetrahydrofolate. The catalysed reaction is IMP + H2O = 5-formamido-1-(5-phospho-D-ribosyl)imidazole-4-carboxamide. Its pathway is purine metabolism; IMP biosynthesis via de novo pathway; 5-formamido-1-(5-phospho-D-ribosyl)imidazole-4-carboxamide from 5-amino-1-(5-phospho-D-ribosyl)imidazole-4-carboxamide (10-formyl THF route): step 1/1. It functions in the pathway purine metabolism; IMP biosynthesis via de novo pathway; IMP from 5-formamido-1-(5-phospho-D-ribosyl)imidazole-4-carboxamide: step 1/1. The chain is Bifunctional purine biosynthesis protein PurH from Streptococcus pyogenes serotype M12 (strain MGAS2096).